A 748-amino-acid polypeptide reads, in one-letter code: Far upstream element-binding protein 2 (748 aa).

Residues 1 to 78 (MSDYNTGGPP…GIRKDAFADA (78 aa)) are disordered. An N-acetylserine modification is found at S2. Over residues 8–17 (GPPPGPPPPA) the composition is skewed to pro residues. Gly residues-rich tracts occupy residues 18–28 (GGGGGAAGAGG) and 36–69 (GAGDRGGGGPGGGGPGGGGASGGPSQPPGGGGPG). R40 is modified (omega-N-methylarginine). K88 is subject to N6-acetyllysine. The interval 90 to 148 (GGDAATTVNNNTPDFGFGGQKRQLEDGDQPDSKKLASQGDSIGSQLGPIHPPPRTSMTE) is disordered. T101 is modified (phosphothreonine). Residues 111 to 123 (RQLEDGDQPDSKK) are compositionally biased toward basic and acidic residues. K122 participates in a covalent cross-link: Glycyl lysine isopeptide (Lys-Gly) (interchain with G-Cter in SUMO1); alternate. A Glycyl lysine isopeptide (Lys-Gly) (interchain with G-Cter in SUMO2); alternate cross-link involves residue K122. Phosphoserine is present on residues S126, S130, S182, S185, S194, and S275. 3 consecutive KH domains span residues 145-209 (SMTE…KMML), 234-300 (GTVQ…CEMV), and 323-387 (GGGI…ARII). The interval 394–422 (LRSGPPGPPGAPGMPPGGRGRGRGQGNWG) is disordered. The segment covering 398 to 408 (PPGPPGAPGMP) has biased composition (pro residues). The segment covering 409–422 (PGGRGRGRGQGNWG) has biased composition (gly residues). Residues R412, R414, R416, and R443 each carry the omega-N-methylarginine modification. The KH 4 domain maps to 425–492 (GGEMTFSIPT…QQIDHAKQLI (68 aa)). Residue S481 is modified to Phosphoserine. Positions 498–570 (GPLCPVGPGP…HDPNKAAAAA (73 aa)) are disordered. 2 stretches are compositionally biased toward pro residues: residues 502 to 521 (PVGPGPGGPGPAGPMGPFNP) and 529 to 543 (PGAPPHAGGPPPHQY). Repeat unit 1 spans residues 572 to 583 (DPNAAWAAYYSH). Residues 572–685 (DPNAAWAAYY…SAAWAEYYRQ (114 aa)) are 4 X 12 AA imperfect repeats. Positions 588-614 (PPGPVPGPAPAPAAPPAQGEPPQPPPT) are enriched in pro residues. Disordered regions lie at residues 588 to 650 (PPGP…KAWE), 659 to 678 (VATGGGPGAPPGSQPDYSAA), and 689 to 735 (YYGQ…PALV). 3 repeat units span residues 618–629 (DYTKAWEEYYKK), 644–655 (DYTKAWEEYYKK), and 674–685 (DYSAAWAEYYRQ).

It belongs to the KHSRP family. Part of a ternary complex containing FUBP2, PTBP1, PTBP2 and HNRPH1. Interacts with PARN. Interacts with PQBP1.

It is found in the nucleus. The protein localises to the cytoplasm. Its function is as follows. Binds to the dendritic targeting element and may play a role in mRNA trafficking. Part of a ternary complex that binds to the downstream control sequence (DCS) of the pre-mRNA. Mediates exon inclusion in transcripts that are subject to tissue-specific alternative splicing. May interact with single-stranded DNA from the far-upstream element (FUSE). May activate gene expression. Also involved in degradation of inherently unstable mRNAs that contain AU-rich elements (AREs) in their 3'-UTR, possibly by recruiting degradation machinery to ARE-containing mRNAs. This chain is Far upstream element-binding protein 2 (Khsrp), found in Mus musculus (Mouse).